Reading from the N-terminus, the 204-residue chain is Probable molybdenum cofactor guanylyltransferase (204 aa).

GTP-binding positions include 10–12 (LSG), Lys-22, Asp-75, and Asp-104. Asp-104 is a binding site for Mg(2+).

The protein belongs to the MobA family. Mg(2+) serves as cofactor.

The protein resides in the cytoplasm. It carries out the reaction Mo-molybdopterin + GTP + H(+) = Mo-molybdopterin guanine dinucleotide + diphosphate. In terms of biological role, transfers a GMP moiety from GTP to Mo-molybdopterin (Mo-MPT) cofactor (Moco or molybdenum cofactor) to form Mo-molybdopterin guanine dinucleotide (Mo-MGD) cofactor. The protein is Probable molybdenum cofactor guanylyltransferase of Methanocaldococcus jannaschii (strain ATCC 43067 / DSM 2661 / JAL-1 / JCM 10045 / NBRC 100440) (Methanococcus jannaschii).